Consider the following 450-residue polypeptide: Putative receptor-like protein kinase At1g72540 (450 aa).

At Thr-73 the chain carries Phosphothreonine. The Protein kinase domain maps to 84–365 (FSKYNFLGEG…TVVKTLEPIL (282 aa)). ATP contacts are provided by residues 90–98 (LGEGGFGEV) and Lys-119. The residue at position 164 (Tyr-164) is a Phosphotyrosine. Catalysis depends on Asp-214, which acts as the Proton acceptor. Ser-218 carries the post-translational modification Phosphoserine. The residue at position 254 (Thr-254) is a Phosphothreonine. Residue Tyr-262 is modified to Phosphotyrosine.

It belongs to the protein kinase superfamily. Ser/Thr protein kinase family.

The catalysed reaction is L-seryl-[protein] + ATP = O-phospho-L-seryl-[protein] + ADP + H(+). It carries out the reaction L-threonyl-[protein] + ATP = O-phospho-L-threonyl-[protein] + ADP + H(+). In Arabidopsis thaliana (Mouse-ear cress), this protein is Putative receptor-like protein kinase At1g72540.